Consider the following 310-residue polypeptide: Manganese ABC transporter substrate-binding lipoprotein scaA (310 aa).

Residues 1–19 (MKKCRFLVLLLLAFVGLAA) form the signal peptide. A lipid anchor (N-palmitoyl cysteine) is attached at cysteine 20. Residue cysteine 20 is the site of S-diacylglycerol cysteine attachment. The Mn(2+) site is built by histidine 68, histidine 140, glutamate 206, and aspartate 281.

It belongs to the bacterial solute-binding protein 9 family. Lipoprotein receptor antigen (Lrai) subfamily. In terms of assembly, the complex is composed of two ATP-binding proteins (ScaC), two transmembrane proteins (ScaB) and a solute-binding protein (ScaA).

The protein resides in the cell membrane. In terms of biological role, part of ATP-binding cassette (ABC) transport system ScaABC involved in manganese import. Essential for growth under Mn(2+)-limiting conditions. Also acts as an adhesin which is involved on adherence to extracellular matrix. It is an important factor in pathogenesis and infection. This is Manganese ABC transporter substrate-binding lipoprotein scaA from Streptococcus gordonii.